The chain runs to 260 residues: 4-hydroxy-tetrahydrodipicolinate reductase (260 aa).

Residues 12-17 (GFRGKM), 92-94 (GTT), and 118-121 (APNF) each bind NAD(+). His148 acts as the Proton donor/acceptor in catalysis. Position 149 (His149) interacts with (S)-2,3,4,5-tetrahydrodipicolinate. Lys152 serves as the catalytic Proton donor. Residue 158–159 (GT) participates in (S)-2,3,4,5-tetrahydrodipicolinate binding.

It belongs to the DapB family.

Its subcellular location is the cytoplasm. It catalyses the reaction (S)-2,3,4,5-tetrahydrodipicolinate + NAD(+) + H2O = (2S,4S)-4-hydroxy-2,3,4,5-tetrahydrodipicolinate + NADH + H(+). It carries out the reaction (S)-2,3,4,5-tetrahydrodipicolinate + NADP(+) + H2O = (2S,4S)-4-hydroxy-2,3,4,5-tetrahydrodipicolinate + NADPH + H(+). It functions in the pathway amino-acid biosynthesis; L-lysine biosynthesis via DAP pathway; (S)-tetrahydrodipicolinate from L-aspartate: step 4/4. In terms of biological role, catalyzes the conversion of 4-hydroxy-tetrahydrodipicolinate (HTPA) to tetrahydrodipicolinate. The chain is 4-hydroxy-tetrahydrodipicolinate reductase from Lactococcus lactis subsp. cremoris (strain MG1363).